The following is a 494-amino-acid chain: Alpha-amylase-related protein (494 aa).

Positions M1–A20 are cleaved as a signal peptide. Q21 is subject to Pyrrolidone carboxylic acid. Residues C48 and C104 are joined by a disulfide bond. Positions 118, 169, and 178 each coordinate Ca(2+). Residues C157 and C171 are joined by a disulfide bond. R206 contributes to the chloride binding site. D208 functions as the Nucleophile in the catalytic mechanism. A Ca(2+)-binding site is contributed by H212. E245 (proton donor) is an active-site residue. Residues N308 and R343 each contribute to the chloride site. Intrachain disulfides connect C376–C382, C418–C441, and C448–C460.

The protein belongs to the glycosyl hydrolase 13 family. Monomer. The cofactor is Ca(2+). Chloride is required as a cofactor.

It localises to the secreted. It catalyses the reaction Endohydrolysis of (1-&gt;4)-alpha-D-glucosidic linkages in polysaccharides containing three or more (1-&gt;4)-alpha-linked D-glucose units.. This chain is Alpha-amylase-related protein (Amyrel), found in Drosophila bocqueti (Fruit fly).